A 431-amino-acid chain; its full sequence is Adenylosuccinate synthetase (431 aa).

Residues 12-18 (GDEGKGK) and 40-42 (GHT) each bind GTP. The active-site Proton acceptor is D13. Residues D13 and G40 each coordinate Mg(2+). Residues 13–16 (DEGK), 38–41 (NAGH), T130, R144, Q225, T240, and R304 each bind IMP. The active-site Proton donor is the H41. 300–306 (ATTGRPR) is a substrate binding site. GTP is bound by residues R306, 332-334 (KLD), and 414-416 (SVG).

It belongs to the adenylosuccinate synthetase family. Homodimer. Mg(2+) serves as cofactor.

It localises to the cytoplasm. It carries out the reaction IMP + L-aspartate + GTP = N(6)-(1,2-dicarboxyethyl)-AMP + GDP + phosphate + 2 H(+). It functions in the pathway purine metabolism; AMP biosynthesis via de novo pathway; AMP from IMP: step 1/2. Plays an important role in the de novo pathway of purine nucleotide biosynthesis. Catalyzes the first committed step in the biosynthesis of AMP from IMP. This is Adenylosuccinate synthetase from Geotalea daltonii (strain DSM 22248 / JCM 15807 / FRC-32) (Geobacter daltonii).